We begin with the raw amino-acid sequence, 193 residues long: Putative 3-methyladenine DNA glycosylase (193 aa).

The protein belongs to the DNA glycosylase MPG family.

In Agrobacterium fabrum (strain C58 / ATCC 33970) (Agrobacterium tumefaciens (strain C58)), this protein is Putative 3-methyladenine DNA glycosylase.